A 1032-amino-acid chain; its full sequence is Integrin alpha-4 (1032 aa).

The signal sequence occupies residues 1–33 (MAWEARREPGPRRAAVRETVMLLLCLGVPTGRP). FG-GAP repeat units follow at residues 35–100 (NVDT…PGQT), 110–177 (NGEP…TELS), 185–237 (QDYV…KYKA), 238–291 (FLDK…EKEL), 292–351 (NILH…GAVM), 355–412 (ETNL…GISS), and 416–478 (QRIE…HPES). Residues 35–977 (NVDTESALLY…HHQRPKRYFT (943 aa)) are Extracellular-facing. A glycan (N-linked (GlcNAc...) asparagine) is linked at Asn-79. Cys-91 and Cys-101 are joined by a disulfide. An N-linked (GlcNAc...) asparagine glycan is attached at Asn-138. 2 disulfides stabilise this stretch: Cys-144–Cys-165 and Cys-183–Cys-198. Asn-229 carries N-linked (GlcNAc...) asparagine glycosylation. Ca(2+)-binding residues include Asp-314, Asn-316, Asp-318, Asp-322, Asp-377, Asp-379, Asp-381, Asp-385, Asp-439, Asp-441, Asn-443, Tyr-445, and Asp-447. N-linked (GlcNAc...) asparagine glycosylation occurs at Asn-480. 2 disulfide bridges follow: Cys-486–Cys-495 and Cys-501–Cys-557. N-linked (GlcNAc...) asparagine glycosylation is found at Asn-518 and Asn-538. The SG1 signature appears at 606–616 (KKEKDIMKKTI). Cys-622 and Cys-627 form a disulfide bridge. N-linked (GlcNAc...) asparagine glycosylation is found at Asn-626, Asn-645, and Asn-660. Cys-698 and Cys-711 are oxidised to a cystine. Residues Asn-806 and Asn-821 are each glycosylated (N-linked (GlcNAc...) asparagine). Intrachain disulfides connect Cys-852/Cys-890 and Cys-897/Cys-902. The chain crosses the membrane as a helical span at residues 978–1001 (IVIISSSLLLGLIVLLLISYVMWK). The Cytoplasmic segment spans residues 1002 to 1032 (AGFFKRQYKSILQEENRRDSWSYINSKSNDD). The short motif at 1003–1007 (GFFKR) is the GFFKR motif element. Position 1021 is a phosphoserine (Ser-1021).

It belongs to the integrin alpha chain family. Heterodimer of an alpha and a beta subunit. The alpha subunit can sometimes be cleaved into two non-covalently associated fragments. Alpha-4 associates with either beta-1 or beta-7. Alpha-4 interacts with PXN, LPXN, and TGFB1I1/HIC5. Interacts with CSPG4 through CSPG4 chondroitin sulfate glycosaminoglycan. Interacts with JAML; integrin alpha-4/beta-1 may regulate leukocyte to endothelial cells adhesion by controlling JAML homodimerization. ITGA4:ITGB1 is found in a ternary complex with CX3CR1 and CX3CL1. Interacts with MDK. ITGA4:ITGB1 interacts with MDK; this interaction mediates MDK-induced osteoblast cells migration through PXN phosphorylation. Integrin ITGA4:ITGB1 interacts with SVEP1 (via Sushi domain 21); thereby inhibits Ca(2+) intracellular signaling and as a result represses vasocontraction. ITGA4:ITGB1 interacts with SELP. ITGA4:ITGB1 interacts with BCAM. Post-translationally, phosphorylation on Ser-1027 inhibits PXN binding. In terms of tissue distribution, expressed in vascular smooth muscle cells (at protein level).

The protein resides in the membrane. Functionally, integrins alpha-4/beta-1 (VLA-4) and alpha-4/beta-7 are receptors for fibronectin. They recognize one or more domains within the alternatively spliced CS-1 and CS-5 regions of fibronectin. They are also receptors for VCAM1. Integrin alpha-4/beta-1 recognizes the sequence Q-I-D-S in VCAM1. Integrin alpha-4/beta-7 is also a receptor for MADCAM1. It recognizes the sequence L-D-T in MADCAM1. On activated endothelial cells integrin VLA-4 triggers homotypic aggregation for most VLA-4-positive leukocyte cell lines. It may also participate in cytolytic T-cell interactions with target cells. ITGA4:ITGB1 binds to fractalkine (CX3CL1) and may act as its coreceptor in CX3CR1-dependent fractalkine signaling. ITGA4:ITGB1 binds to PLA2G2A via a site (site 2) which is distinct from the classical ligand-binding site (site 1) and this induces integrin conformational changes and enhanced ligand binding to site 1. Integrin ITGA4:ITGB1 represses PRKCA-mediated L-type voltage-gated channel Ca(2+) influx and ROCK-mediated calcium sensitivity in vascular smooth muscle cells via its interaction with SVEP1, thereby inhibiting vasocontraction. In Homo sapiens (Human), this protein is Integrin alpha-4 (ITGA4).